The sequence spans 132 residues: Small ribosomal subunit protein uS8 (132 aa).

The protein belongs to the universal ribosomal protein uS8 family. As to quaternary structure, part of the 30S ribosomal subunit. Contacts proteins S5 and S12.

Its function is as follows. One of the primary rRNA binding proteins, it binds directly to 16S rRNA central domain where it helps coordinate assembly of the platform of the 30S subunit. This chain is Small ribosomal subunit protein uS8, found in Kocuria rhizophila (strain ATCC 9341 / DSM 348 / NBRC 103217 / DC2201).